The primary structure comprises 111 residues: Small ribosomal subunit protein bS16 (111 aa).

Residues 92–111 (MEVKAKNRKARPSKKEDKEA) are disordered.

The protein belongs to the bacterial ribosomal protein bS16 family.

The polypeptide is Small ribosomal subunit protein bS16 (Rickettsia massiliae (strain Mtu5)).